A 145-amino-acid polypeptide reads, in one-letter code: ATP synthase epsilon chain (145 aa).

It belongs to the ATPase epsilon chain family. In terms of assembly, F-type ATPases have 2 components, CF(1) - the catalytic core - and CF(0) - the membrane proton channel. CF(1) has five subunits: alpha(3), beta(3), gamma(1), delta(1), epsilon(1). CF(0) has three main subunits: a, b and c.

It is found in the cell inner membrane. Functionally, produces ATP from ADP in the presence of a proton gradient across the membrane. The protein is ATP synthase epsilon chain of Francisella tularensis subsp. tularensis (strain FSC 198).